Consider the following 122-residue polypeptide: Large ribosomal subunit protein uL14 (122 aa).

It belongs to the universal ribosomal protein uL14 family. Part of the 50S ribosomal subunit. Forms a cluster with proteins L3 and L19. In the 70S ribosome, L14 and L19 interact and together make contacts with the 16S rRNA in bridges B5 and B8.

In terms of biological role, binds to 23S rRNA. Forms part of two intersubunit bridges in the 70S ribosome. This chain is Large ribosomal subunit protein uL14, found in Rhodospirillum rubrum (strain ATCC 11170 / ATH 1.1.1 / DSM 467 / LMG 4362 / NCIMB 8255 / S1).